We begin with the raw amino-acid sequence, 303 residues long: Terpene synthase (303 aa).

Residues aspartate 69 and aspartate 73 each coordinate Mg(2+). Positions 69-73 match the DDXXD motif motif; that stretch reads DDIQD.

It belongs to the FPP/GGPP synthase family. Mg(2+) is required as a cofactor.

It carries out the reaction (2E)-geranyl diphosphate + H2O = (2E)-geraniol + diphosphate. In terms of biological role, terpene synthase that is able to convert geraniol diphosphate to geraniol in tea leaves. This Matsumurasca onukii (Tea green leafhopper) protein is Terpene synthase.